We begin with the raw amino-acid sequence, 892 residues long: Putative VWFA domain-containing protein ORF892 (892 aa).

Residues 109–548 are disordered; sequence EEQLQRRPQR…RGYAHGDEDL (440 aa). Positions 129 to 142 are enriched in polar residues; it reads SEVANQRVSRSAEN. Residues 143–162 are compositionally biased toward basic and acidic residues; it reads QGKRGNEEKQQQKTPGKTEE. Positions 169 to 184 are enriched in acidic residues; sequence ESGEEGNQQEESGEEQ. Over residues 185 to 196 the composition is skewed to basic and acidic residues; sequence EGVKGSRSKQRE. Acidic residues predominate over residues 212–223; sequence ESGESESEEGQS. Composition is skewed to low complexity over residues 224–238 and 271–283; these read SEET…GNQQ and GNGQ…AQNG. Positions 287-300 are enriched in acidic residues; it reads GESEGEITESESAS. A compositionally biased stretch (low complexity) spans 301–323; that stretch reads EEQTGSKGKSGQQGEEGQQQSGS. Composition is skewed to acidic residues over residues 324 to 336 and 425 to 448; these read EGEE…ESGE and SESE…ETEE. Residues 453–466 are compositionally biased toward low complexity; it reads SEAEGTAAEGEVGQ. Composition is skewed to polar residues over residues 467–481 and 512–531; these read PSEQ…SGQR and QTGS…QQGE. A compositionally biased stretch (basic and acidic residues) spans 536 to 546; that stretch reads EGGRGYAHGDE. Residues 553–620 are a coiled coil; the sequence is QEINSILQTL…VQKLLKDLNV (68 aa). Residues 723–892 enclose the VWFA domain; sequence DFLFVIDSSG…GNIVLKRLVH (170 aa).

This chain is Putative VWFA domain-containing protein ORF892, found in Acidianus two-tailed virus (ATV).